Here is a 519-residue protein sequence, read N- to C-terminus: Demethylepipodophyllotoxin synthase (519 aa).

A helical transmembrane segment spans residues 6 to 26; the sequence is CLETLLLGFFVLLPCFFYFVW. C458 serves as a coordination point for heme.

The protein belongs to the cytochrome P450 family. The cofactor is heme. As to expression, rhizome-specific expression.

The protein localises to the membrane. It carries out the reaction (-)-4'-desmethyl-deoxypodophyllotoxin + reduced [NADPH--hemoprotein reductase] + O2 = 4'-demethylepipodophyllotoxin + oxidized [NADPH--hemoprotein reductase] + H2O + H(+). The protein operates within aromatic compound metabolism; phenylpropanoid biosynthesis. In terms of biological role, cytochrome P450 involved in the biosynthesis of etoposide, a chemotherapeutic compound of the topoisomerase inhibitor family. Catalyzes the hydroxylation of deoxypodophyllotoxin to form epipodophyllotoxin. This is Demethylepipodophyllotoxin synthase from Sinopodophyllum hexandrum (Himalayan may apple).